We begin with the raw amino-acid sequence, 287 residues long: ATP synthase gamma chain (287 aa).

This sequence belongs to the ATPase gamma chain family. As to quaternary structure, F-type ATPases have 2 components, CF(1) - the catalytic core - and CF(0) - the membrane proton channel. CF(1) has five subunits: alpha(3), beta(3), gamma(1), delta(1), epsilon(1). CF(0) has three main subunits: a, b and c. The F(1)F(0) complex interacts with SpoIIIJ and YqjG; YqgA is found in the same complex. Interacts with FloT.

The protein localises to the cell membrane. It is found in the membrane raft. Produces ATP from ADP in the presence of a proton gradient across the membrane. The gamma chain is believed to be important in regulating ATPase activity and the flow of protons through the CF(0) complex. The protein is ATP synthase gamma chain of Bacillus subtilis (strain 168).